The following is a 284-amino-acid chain: Proteasome subunit beta 1 (284 aa).

The propeptide at 1 to 56 (MASHDSYTGRLPGAFMNPGTSSFTEFLASYNPDLLPGRHMTALAGGMPGNVEAPHA) is removed in mature form; by autocatalysis. Thr57 serves as the catalytic Nucleophile.

Belongs to the peptidase T1B family. The 20S proteasome core is composed of 14 alpha and 14 beta subunits that assemble into four stacked heptameric rings, resulting in a barrel-shaped structure. The two inner rings, each composed of seven catalytic beta subunits, are sandwiched by two outer rings, each composed of seven alpha subunits. The catalytic chamber with the active sites is on the inside of the barrel. Has a gated structure, the ends of the cylinder being occluded by the N-termini of the alpha-subunits. Is capped by the proteasome-associated ATPase, ARC.

It is found in the cytoplasm. The catalysed reaction is Cleavage of peptide bonds with very broad specificity.. It participates in protein degradation; proteasomal Pup-dependent pathway. With respect to regulation, the formation of the proteasomal ATPase ARC-20S proteasome complex, likely via the docking of the C-termini of ARC into the intersubunit pockets in the alpha-rings, may trigger opening of the gate for substrate entry. Interconversion between the open-gate and close-gate conformations leads to a dynamic regulation of the 20S proteasome proteolysis activity. Functionally, component of the proteasome core, a large protease complex with broad specificity involved in protein degradation. The polypeptide is Proteasome subunit beta 1 (Thermomonospora curvata (strain ATCC 19995 / DSM 43183 / JCM 3096 / KCTC 9072 / NBRC 15933 / NCIMB 10081 / Henssen B9)).